The chain runs to 185 residues: Peptidyl-tRNA hydrolase (185 aa).

Y14 serves as a coordination point for tRNA. The active-site Proton acceptor is the H19. TRNA is bound by residues F63, N65, and N111.

This sequence belongs to the PTH family. As to quaternary structure, monomer.

It is found in the cytoplasm. The catalysed reaction is an N-acyl-L-alpha-aminoacyl-tRNA + H2O = an N-acyl-L-amino acid + a tRNA + H(+). Its function is as follows. Hydrolyzes ribosome-free peptidyl-tRNAs (with 1 or more amino acids incorporated), which drop off the ribosome during protein synthesis, or as a result of ribosome stalling. Catalyzes the release of premature peptidyl moieties from peptidyl-tRNA molecules trapped in stalled 50S ribosomal subunits, and thus maintains levels of free tRNAs and 50S ribosomes. This is Peptidyl-tRNA hydrolase from Desulfitobacterium hafniense (strain Y51).